The following is a 448-amino-acid chain: Phosphoglucosamine mutase (448 aa).

Serine 100 serves as the catalytic Phosphoserine intermediate. Residues serine 100, aspartate 240, aspartate 242, and aspartate 244 each coordinate Mg(2+). Serine 100 is subject to Phosphoserine.

Belongs to the phosphohexose mutase family. The cofactor is Mg(2+). In terms of processing, activated by phosphorylation.

The enzyme catalyses alpha-D-glucosamine 1-phosphate = D-glucosamine 6-phosphate. In terms of biological role, catalyzes the conversion of glucosamine-6-phosphate to glucosamine-1-phosphate. In Clostridium perfringens (strain ATCC 13124 / DSM 756 / JCM 1290 / NCIMB 6125 / NCTC 8237 / Type A), this protein is Phosphoglucosamine mutase.